We begin with the raw amino-acid sequence, 310 residues long: B3 domain-containing protein At4g02870 (310 aa).

Residues 1 to 21 (MTLSDDPISPSTQESSNSSYV) show a composition bias toward polar residues. Positions 1–39 (MTLSDDPISPSTQESSNSSYVRSKEAEKNSPSQETDEEV) are disordered. Residues 205–300 (RCGRLILQSS…RLQFGVISRN (96 aa)) constitute a DNA-binding region (TF-B3).

Its subcellular location is the nucleus. This Arabidopsis thaliana (Mouse-ear cress) protein is B3 domain-containing protein At4g02870 (ARF42).